Here is a 367-residue protein sequence, read N- to C-terminus: MSESQTLVVKLGTSVLTGGSRRLNRAHIVELVRQCAQLHAMGHRIVIVTSGAIAAGREHLGYPELPATIASKQLLAAVGQSRLIQLWEQLFSIYGIHVGQMLLTRADMEDRERFLNARDTLRALLDNSIVPVINENDAVATAEIKVGDNDNLSALAAILAGADKLLLLTDQPGLFTADPRSNPQAELIKDVYGIDDALRAIAGDSVSGLGTGGMGTKLQAADVACRAGIDTIIAAGNRPDVIGHAMAGLPVGTCFHAQESPLENRKRWIFGAPPAGEITVDAGATQAILERGSSLLPKGIKIVSGNFSRGEVIRIRNSEGRDIAHGVSRYNSDALRLIAGQHSQQIDAILGYEYGPVAVHRDDMIIR.

Residue lysine 10 coordinates ATP. 3 residues coordinate substrate: serine 50, aspartate 137, and asparagine 149. ATP is bound by residues 169–170 and 211–217; these read TD and TGGMGTK. The 79-residue stretch at 275–353 folds into the PUA domain; it reads AGEITVDAGA…QQIDAILGYE (79 aa).

Belongs to the glutamate 5-kinase family.

The protein resides in the cytoplasm. It catalyses the reaction L-glutamate + ATP = L-glutamyl 5-phosphate + ADP. The protein operates within amino-acid biosynthesis; L-proline biosynthesis; L-glutamate 5-semialdehyde from L-glutamate: step 1/2. Its function is as follows. Catalyzes the transfer of a phosphate group to glutamate to form L-glutamate 5-phosphate. The protein is Glutamate 5-kinase of Klebsiella pneumoniae subsp. pneumoniae (strain ATCC 700721 / MGH 78578).